The primary structure comprises 101 residues: Ubiquitin-related modifier 1 homolog (101 aa).

Glycine 101 is modified (1-thioglycine). Glycine 101 participates in a covalent cross-link: Glycyl lysine isopeptide (Gly-Lys) (interchain with K-? in acceptor proteins).

The protein belongs to the URM1 family. In terms of assembly, interacts with cer. C-terminal thiocarboxylation occurs in 2 steps, it is first acyl-adenylated (-COAMP) via the hesA/moeB/thiF part of the MOCS3 homolog, then thiocarboxylated (-COSH) via the rhodanese domain of the MOCS3 homolog.

Its subcellular location is the cytoplasm. Its pathway is tRNA modification; 5-methoxycarbonylmethyl-2-thiouridine-tRNA biosynthesis. Functionally, acts as a sulfur carrier required for 2-thiolation of mcm(5)S(2)U at tRNA wobble positions of cytosolic tRNA(Lys), tRNA(Glu) and tRNA(Gln). Serves as sulfur donor in tRNA 2-thiolation reaction by being thiocarboxylated (-COSH) at its C-terminus by MOCS3. The sulfur is then transferred to tRNA to form 2-thiolation of mcm(5)S(2)U. Also acts as a ubiquitin-like protein (UBL) that is covalently conjugated via an isopeptide bond to lysine residues of target proteins such as Prx2/Jafrac1, Ciao1, Eip71CD and GILT1. The thiocarboxylated form serves as substrate for conjugation and oxidative stress specifically induces the formation of UBL-protein conjugates. In Drosophila ananassae (Fruit fly), this protein is Ubiquitin-related modifier 1 homolog.